A 290-amino-acid chain; its full sequence is Programmed cell death 1 ligand 1 (290 aa).

The N-terminal stretch at 1 to 18 (MRIFAGIIFTACCHLLRA) is a signal peptide. Residues 19–127 (FTITAPKDLY…YGGADYKRIT (109 aa)) form the Ig-like V-type domain. At 19-239 (FTITAPKDLY…ATHPPQNRTH (221 aa)) the chain is on the extracellular side. An N-linked (GlcNAc...) asparagine glycan is attached at Asn-35. Disulfide bonds link Cys-40/Cys-114 and Cys-154/Cys-208. The 92-residue stretch at 133-224 (PYRKINQRIS…PGQNHTAELI (92 aa)) folds into the Ig-like C2-type domain. N-linked (GlcNAc...) asparagine glycosylation is found at Asn-191, Asn-199, Asn-218, and Asn-236. The helical transmembrane segment at 240-260 (WVLLGSILLFLIVVSTVLLFL) threads the bilayer. Residues 261–290 (RKQVRMLDVEKCGVEDTSSKNRNDTQFEET) lie on the Cytoplasmic side of the membrane.

Belongs to the immunoglobulin superfamily. BTN/MOG family. As to quaternary structure, interacts with PDCD1. Interacts with CMTM4 and CMTM6. Interacts with CD80. Ubiquitinated; STUB1 likely mediates polyubiquitination of PD-L1/CD274 triggering its degradation. Ubiquitinated by MARCHF8; leading to degradation. Deubiquitinated by USP22; leading to stabilization. As to expression, highly expressed in the heart, thymus, skeletal muscle, and lung. Weakly expressed in the kidney, spleen, thyroid, and liver. Expressed on activated dendritic cells, B-cells and macrophages. Expressed in numerous tumor cells lines of lymphoid origin.

The protein localises to the cell membrane. The protein resides in the early endosome membrane. It localises to the recycling endosome membrane. In terms of biological role, plays a critical role in induction and maintenance of immune tolerance to self. As a ligand for the inhibitory receptor PDCD1/PD-1, modulates the activation threshold of T-cells and limits T-cell effector response. Through a yet unknown activating receptor, may costimulate T-cell subsets that predominantly produce interleukin-10 (IL10). Its function is as follows. The PDCD1-mediated inhibitory pathway is exploited by tumors to attenuate anti-tumor immunity and escape destruction by the immune system, thereby facilitating tumor survival. The interaction with PDCD1/PD-1 inhibits cytotoxic T lymphocytes (CTLs) effector function. The blockage of the PDCD1-mediated pathway results in the reversal of the exhausted T-cell phenotype and the normalization of the anti-tumor response, providing a rationale for cancer immunotherapy. The chain is Programmed cell death 1 ligand 1 (Cd274) from Mus musculus (Mouse).